Consider the following 253-residue polypeptide: ATP synthase subunit a (253 aa).

Helical transmembrane passes span 30 to 50 (FTNAAFFMLVIVALASLVLLA), 88 to 108 (FFPFVFSIFMFVFLANLIGLV), 118 to 138 (IAVTFGLAMIVIGTVVIYGLI), 144 to 164 (FLGIFAPSGVSPLLLPFMIMI), 184 to 204 (MLAGHITLKVMGGFVAGLLGA), and 211 to 231 (VAPLPLAMVVIFTAFELLVAF).

It belongs to the ATPase A chain family. As to quaternary structure, F-type ATPases have 2 components, CF(1) - the catalytic core - and CF(0) - the membrane proton channel. CF(1) has five subunits: alpha(3), beta(3), gamma(1), delta(1), epsilon(1). CF(0) has three main subunits: a(1), b(2) and c(9-12). The alpha and beta chains form an alternating ring which encloses part of the gamma chain. CF(1) is attached to CF(0) by a central stalk formed by the gamma and epsilon chains, while a peripheral stalk is formed by the delta and b chains.

Its subcellular location is the cell inner membrane. Its function is as follows. Key component of the proton channel; it plays a direct role in the translocation of protons across the membrane. In Beijerinckia indica subsp. indica (strain ATCC 9039 / DSM 1715 / NCIMB 8712), this protein is ATP synthase subunit a.